A 330-amino-acid chain; its full sequence is Cytosolic iron-sulfur protein assembly protein 1 (330 aa).

7 WD repeats span residues L12 to D53, A56 to F95, G105 to E144, E151 to V190, G195 to Q236, V248 to F286, and C292 to A330.

It belongs to the WD repeat CIA1 family. Interacts with NAR1.

The protein resides in the cytoplasm. It localises to the nucleus. Essential component of the cytosolic iron-sulfur (Fe/S) protein assembly machinery. Required for the maturation of extramitochondrial Fe/S proteins. In Saccharomyces cerevisiae (strain ATCC 204508 / S288c) (Baker's yeast), this protein is Cytosolic iron-sulfur protein assembly protein 1.